Consider the following 423-residue polypeptide: MANNLESNISQIVLKKFLPGFMSDIVLCKTVDRQLLSGEINSNTGDSVSFKRPHQFKSERTETGDITGKDKNGLFSAKATGKVGKYITVAVEWTQIEEALKLNQLDQILSPIHERMVTDLETELAHFMMNNGALSLGSPNTAIKKWADVAQTASFIKDIGIKTGENYAIMDPWSAQRLADAQSGLHAADQLVRTAWENAQISGNFGGIRALMSNGLASRKQGDFDGAITVKTAPNVDYLSVKDSYQFTVALTGATPSKTGFLKAGDQLKFTSTHWLNQQSKQTLYNGSTAMSFTATVLEETNSTASGDVTVKLSGVPIYDEKNSQYNAVDAKVKAGDAVSIIGTAKQQMKPNLFYNKFFCGLGTIPLPKLHSLDSAVATYEGFSIRVHKYADGDANKQMMRFDLLPAYVCFNPHMGGQFFGNP.

Positions 47–67 (SVSFKRPHQFKSERTETGDIT) are disordered. Over residues 56–67 (FKSERTETGDIT) the composition is skewed to basic and acidic residues.

Belongs to the P22 phage major capsid protein family.

Its subcellular location is the virion. Assembles to form an icosahedral capsid. This chain is Major capsid protein (24), found in Escherichia coli (Bacteriophage APSE-1).